The sequence spans 261 residues: Putative outer membrane protein TC_0650 (261 aa).

A signal peptide spans 1 to 17; the sequence is MRFLFAFILLCSPWVSE.

It localises to the cell outer membrane. This Chlamydia muridarum (strain MoPn / Nigg) protein is Putative outer membrane protein TC_0650.